The sequence spans 493 residues: GTPase Der (493 aa).

EngA-type G domains are found at residues 3 to 166 and 207 to 380; these read PVVA…SGKG and LKLA…DCAT. GTP-binding positions include 9 to 16, 56 to 60, 118 to 121, 213 to 220, 260 to 264, and 325 to 328; these read GRPNVGKS, DTGGI, NKTD, GKPNVGKS, DTAGV, and NKWD. One can recognise a KH-like domain in the interval 381-465; it reads RRVNTSLLTR…PIRIQFKEGA (85 aa).

This sequence belongs to the TRAFAC class TrmE-Era-EngA-EngB-Septin-like GTPase superfamily. EngA (Der) GTPase family. In terms of assembly, associates with the 50S ribosomal subunit.

In terms of biological role, GTPase that plays an essential role in the late steps of ribosome biogenesis. The protein is GTPase Der of Photorhabdus laumondii subsp. laumondii (strain DSM 15139 / CIP 105565 / TT01) (Photorhabdus luminescens subsp. laumondii).